Consider the following 362-residue polypeptide: Endopolygalacturonase II (362 aa).

The first 21 residues, 1–21, serve as a signal peptide directing secretion; sequence MHSFASLLAYGLVAGATFASA. Positions 22-27 are excised as a propeptide; sequence SPIEAR. C30 and C45 are joined by a disulfide. A PbH1 1 repeat occupies 156–186; that stretch reads ANDITFTDVTINNADGDTQGGHNTDAFDVGN. D201 functions as the Proton donor in the catalytic mechanism. Cysteines 203 and 219 form a disulfide. 4 PbH1 repeats span residues 209-229, 238-259, 267-289, and 301-322; these read GENI…SIGS, VKNV…RIKT, VSEI…VIQQ, and TNGV…DSGA. H223 is a catalytic residue. N240 carries N-linked (GlcNAc...) (high mannose) asparagine glycosylation. Cystine bridges form between C329–C334 and C353–C362.

It belongs to the glycosyl hydrolase 28 family.

The protein localises to the secreted. The enzyme catalyses (1,4-alpha-D-galacturonosyl)n+m + H2O = (1,4-alpha-D-galacturonosyl)n + (1,4-alpha-D-galacturonosyl)m.. In terms of biological role, involved in maceration and soft-rotting of plant tissue. Hydrolyzes the 1,4-alpha glycosidic bonds of de-esterified pectate in the smooth region of the plant cell wall. This is Endopolygalacturonase II (pgaII) from Aspergillus niger (strain ATCC 1015 / CBS 113.46 / FGSC A1144 / LSHB Ac4 / NCTC 3858a / NRRL 328 / USDA 3528.7).